Here is a 538-residue protein sequence, read N- to C-terminus: Syncytin-2 (538 aa).

A signal peptide spans 1 to 15 (MGLLLLVLILTPLLA). The Extracellular portion of the chain corresponds to 16–478 (AHRHPDFPLL…GWLNWEGTWK (463 aa)). Residues 43–46 (CWLC) carry the CXXC motif. Cystine bridges form between C43/C46, C43/C439, and C431/C438. N133, N146, N177, N220, N241, N247, N312, and N332 each carry an N-linked (GlcNAc...) asparagine glycan. Residues 354-374 (FIPLLAGLGIIAGTGTGIAGI) are fusion peptide. The CKS-17 motif lies at 414–430 (LQNRRGLDMLTAAQGGI). The CX6CC signature appears at 431–439 (CLALDEKCC). An N-linked (GlcNAc...) asparagine glycan is attached at N443. A helical transmembrane segment spans residues 479–499 (WFSWVLPFTGPLVSLLLLLLF). The Cytoplasmic portion of the chain corresponds to 500–538 (GPCLLNLITQFVLSRLQAIKLQTNLSAGCRPHNIQESPF).

The protein belongs to the gamma type-C retroviral envelope protein family. HERV class-I FRD env subfamily. As to quaternary structure, the surface and transmembrane proteins form a heterodimer. They are attached by non-covalent interactions or by a labile interchain disulfide bond. Specific enzymatic cleavages in vivo yield the mature SU and TM proteins. In terms of processing, the CXXC motif is highly conserved across a broad range of retroviral envelope proteins. It is thought to participate in the formation of a labile disulfide bond possibly with the CX6CC motif present in the transmembrane protein.

It is found in the virion. The protein resides in the cell membrane. This endogenous retroviral envelope protein has retained its original fusogenic properties and participates in trophoblast fusion and the formation of a syncytium during placenta morphogenesis. The interaction with MFSD2A is apparently important for this process. In terms of biological role, endogenous envelope proteins may have kept, lost or modified their original function during evolution but this one can still make pseudotypes with MLV, HIV-1 or SIV-1 virions and confer infectivity. Retroviral envelope proteins mediate receptor recognition and membrane fusion during early infection. The surface protein mediates receptor recognition, while the transmembrane protein anchors the envelope heterodimer to the viral membrane through one transmembrane domain. The other hydrophobic domain, called fusion peptide, mediates fusion of the viral membrane with the target cell membrane. The protein is Syncytin-2 (ERVFRD-1) of Pongo pygmaeus (Bornean orangutan).